The primary structure comprises 548 residues: Glucose-6-phosphate isomerase (548 aa).

The Proton donor role is filled by glutamate 355. Active-site residues include histidine 386 and lysine 511.

This sequence belongs to the GPI family.

It is found in the cytoplasm. The enzyme catalyses alpha-D-glucose 6-phosphate = beta-D-fructose 6-phosphate. It participates in carbohydrate biosynthesis; gluconeogenesis. The protein operates within carbohydrate degradation; glycolysis; D-glyceraldehyde 3-phosphate and glycerone phosphate from D-glucose: step 2/4. In terms of biological role, catalyzes the reversible isomerization of glucose-6-phosphate to fructose-6-phosphate. The protein is Glucose-6-phosphate isomerase of Wigglesworthia glossinidia brevipalpis.